The primary structure comprises 103 residues: Major carboxysome shell protein CsoS1 (103 aa).

A BMC domain is found at 9-94; the sequence is ALGMIETRGL…PHREVEPALG (86 aa).

Belongs to the bacterial microcompartments protein family. CsoS1 subfamily. As to quaternary structure, homohexamer with a small central pore. A CsoS1-CsoS1D-CsoS2 complex can be isolated following expression in E.coli. Forms a CsoS2-CsoS1-RuBisCO complex.

It localises to the carboxysome. The major shell protein of the carboxysome, a polyhedral inclusion where RuBisCO (ribulose bisphosphate carboxylase, ccbL-ccbS) is sequestered. Assembles into hexamers which make sheets that form the facets of the polyhedral carboxysome. There are estimated to be 538 CsoS1 hexamers per carboxysome; note this number includes the probable carboxysome shell vertex proteins CsoS4A and CsoS4B. The polypeptide is Major carboxysome shell protein CsoS1 (Prochlorococcus marinus subsp. pastoris (strain CCMP1986 / NIES-2087 / MED4)).